The chain runs to 250 residues: Proteasome subunit alpha type-7 (250 aa).

This sequence belongs to the peptidase T1A family. In terms of assembly, the 26S proteasome consists of a 20S proteasome core and two 19S regulatory subunits. The 20S proteasome core is composed of 28 subunits that are arranged in four stacked rings, resulting in a barrel-shaped structure. The two end rings are each formed by seven alpha subunits, and the two central rings are each formed by seven beta subunits. The catalytic chamber with the active sites is on the inside of the barrel.

The protein localises to the cytoplasm. Its subcellular location is the nucleus. Its function is as follows. The proteasome is a multicatalytic proteinase complex which is characterized by its ability to cleave peptides with Arg, Phe, Tyr, Leu, and Glu adjacent to the leaving group at neutral or slightly basic pH. The proteasome has an ATP-dependent proteolytic activity. In Dictyostelium discoideum (Social amoeba), this protein is Proteasome subunit alpha type-7 (psmA7).